A 504-amino-acid polypeptide reads, in one-letter code: GTPase Der (504 aa).

The EngA-type G 1 domain occupies 3-166 (PVVALVGRPN…QVLAPLAEKL (164 aa)). Residues 9–16 (GRPNVGKS), 56–60 (DTGGI), and 118–121 (NKTD) each bind GTP. Residues 171 to 190 (VDSDENVADDEQDEWDSDFD) are disordered. Acidic residues predominate over residues 172-190 (DSDENVADDEQDEWDSDFD). An EngA-type G 2 domain is found at 216–389 (IKIAIVGRPN…SIQEAYQCAT (174 aa)). GTP contacts are provided by residues 222 to 229 (GRPNVGKS), 269 to 273 (DTAGV), and 334 to 337 (NKWD). The KH-like domain maps to 390 to 474 (KKMTTSMLTR…PIRVLFQEGN (85 aa)).

This sequence belongs to the TRAFAC class TrmE-Era-EngA-EngB-Septin-like GTPase superfamily. EngA (Der) GTPase family. In terms of assembly, associates with the 50S ribosomal subunit.

Functionally, GTPase that plays an essential role in the late steps of ribosome biogenesis. In Glaesserella parasuis serovar 5 (strain SH0165) (Haemophilus parasuis), this protein is GTPase Der.